The primary structure comprises 232 residues: Aquaporin Z (232 aa).

A run of 2 helical transmembrane segments spans residues 8–28 (AFGT…AAGF) and 33–53 (IGLL…AFAI). The NPA 1 motif lies at 62–64 (NPA). 3 helical membrane passes run 84–104 (IIAQ…IATG), 130–150 (MLAA…VIMG), and 159–179 (GFAP…SIPV). Residues 185–187 (NPA) carry the NPA 2 motif. The helical transmembrane segment at 201–221 (VSQLWLFWVAPIVGGVLGAVI) threads the bilayer.

This sequence belongs to the MIP/aquaporin (TC 1.A.8) family. Homotetramer.

It is found in the cell inner membrane. The enzyme catalyses H2O(in) = H2O(out). Functionally, channel that permits osmotically driven movement of water in both directions. It is involved in the osmoregulation and in the maintenance of cell turgor during volume expansion in rapidly growing cells. It mediates rapid entry or exit of water in response to abrupt changes in osmolarity. In Vibrio parahaemolyticus serotype O3:K6 (strain RIMD 2210633), this protein is Aquaporin Z.